The chain runs to 393 residues: Mitogen-activated protein kinase homolog NTF4 (393 aa).

The interval Met-1–Asn-32 is disordered. Positions Lys-60–Leu-345 constitute a Protein kinase domain. Residues Ile-66–Val-74 and Lys-89 each bind ATP. The active-site Proton acceptor is the Asp-186. At Thr-218 the chain carries Phosphothreonine. The short motif at Thr-218 to Tyr-220 is the TXY element. Phosphotyrosine is present on Tyr-220.

This sequence belongs to the protein kinase superfamily. CMGC Ser/Thr protein kinase family. MAP kinase subfamily. The cofactor is Mg(2+). Post-translationally, dually phosphorylated on Thr-218 and Tyr-220, which activates the enzyme. Very low autophosphorylation, although dramatically increased when Mn(2+) is added to the reaction instead of Mg(2+).

It catalyses the reaction L-seryl-[protein] + ATP = O-phospho-L-seryl-[protein] + ADP + H(+). It carries out the reaction L-threonyl-[protein] + ATP = O-phospho-L-threonyl-[protein] + ADP + H(+). Its activity is regulated as follows. Activated by tyrosine and threonine phosphorylation. The protein is Mitogen-activated protein kinase homolog NTF4 (NTF4) of Nicotiana tabacum (Common tobacco).